Here is a 379-residue protein sequence, read N- to C-terminus: AT-rich binding protein (379 aa).

The C2H2-type 1 zinc-finger motif lies at 29–52 (IVCHTCQEELQTQDQFWKHIQDEH). The segment covering 114–124 (EQREVELHEAH) has biased composition (basic and acidic residues). 2 disordered regions span residues 114-148 (EQRE…DAAK) and 221-267 (PTAS…STTL). Low complexity-rich tracts occupy residues 125-143 (QQQQ…QQQQ), 223-242 (ASFV…TTPP), and 249-262 (QQQQ…QQQQ). C2H2-type zinc fingers lie at residues 312–336 (YICD…RVVH) and 342–365 (FNCD…KKKH).

It is found in the nucleus. May be a transcription factor for genes having (A+T) stretches in their promoter and/or enhancer regions. Binds to AT rich DNA. The chain is AT-rich binding protein from Drosophila willistoni (Fruit fly).